Consider the following 201-residue polypeptide: Small ribosomal subunit protein uS4 (201 aa).

The segment at 1-46 is disordered; it reads MARYTGPRSRISRRFGEPVMGDSKALQKKNYAPGMHGRNKKRKQSE. Positions 92–151 constitute an S4 RNA-binding domain; the sequence is ARLDNTVYRLGIASSRRAARQLVIHKHIVVNGDVVNIPSYQLKPGDQLGVREKSKSIEAI.

It belongs to the universal ribosomal protein uS4 family. As to quaternary structure, part of the 30S ribosomal subunit. Contacts protein S5. The interaction surface between S4 and S5 is involved in control of translational fidelity.

Functionally, one of the primary rRNA binding proteins, it binds directly to 16S rRNA where it nucleates assembly of the body of the 30S subunit. In terms of biological role, with S5 and S12 plays an important role in translational accuracy. This chain is Small ribosomal subunit protein uS4, found in Cytophaga hutchinsonii (strain ATCC 33406 / DSM 1761 / CIP 103989 / NBRC 15051 / NCIMB 9469 / D465).